Consider the following 541-residue polypeptide: Calcium/calmodulin-dependent protein kinase kinase (541 aa).

The disordered stretch occupies residues 83–106 (AVQEDDEAGPHSSNNLAATMSPNL). The span at 93–106 (HSSNNLAATMSPNL) shows a compositional bias: polar residues. Residues 130–411 (YRLMEEIGQG…LHEVKVHTWV (282 aa)) form the Protein kinase domain. Residues 136–144 (IGQGSYGIV) and Lys159 contribute to the ATP site. Residues 169-190 (NFACFRQPPPRRNKENAAPSVL) form an RP domain region. The active-site Proton acceptor is the Asp276. Residues 437 to 442 (ENCVRV) form an autoinhibitory domain region. The calmodulin-binding stretch occupies residues 440–465 (VRVIPRLDTLILVKAMGHRKRFGNPF). The segment at 462-512 (GNPFRNKLSAQSSIRDRRKSSSVKDPTYVPPPNSPPATSNNNLNSTKVDRP) is disordered. Residues 497-507 (PATSNNNLNST) show a composition bias toward low complexity.

It belongs to the protein kinase superfamily. Ser/Thr protein kinase family. It depends on Mg(2+) as a cofactor. As to expression, expressed in head and tail neurons and vulval muscles.

The protein resides in the cytoplasm. The catalysed reaction is L-seryl-[protein] + ATP = O-phospho-L-seryl-[protein] + ADP + H(+). It catalyses the reaction L-threonyl-[protein] + ATP = O-phospho-L-threonyl-[protein] + ADP + H(+). Activated by Ca(2+)/calmodulin. Binding of calmodulin may relieve intrasteric autoinhibition. In terms of biological role, calcium/calmodulin-dependent protein kinase which phosphorylates cmk-1. Component of a calcium-triggered signaling cascade involved in CRE-mediated transcriptional activation, probably through cmk-1-mediated crh-1/CREB phosphorylation. Plays a role in salt-avoidance learning behavior via the phosphorylation of cmk-1. The polypeptide is Calcium/calmodulin-dependent protein kinase kinase (Caenorhabditis elegans).